The primary structure comprises 51 residues: Ribosomal protein eL39-like 2 (51 aa).

This sequence belongs to the eukaryotic ribosomal protein eL39 family. Component of a male germ cell-specific 60S large ribosomal subunit (LSU), which contains RPL10L and RPL39L, instead of RPL10 and RPL39 paralogs. The composition of the rest of the complex is similar to classical ribosomes. Testis specific.

It is found in the cytoplasm. Its function is as follows. Male germ cell-specific component of the ribosome, which is required for the formation of sperm and male fertility. Replaces the RPL39 paralog in the ribosome of male germ cells. The ribosome is a large ribonucleoprotein complex responsible for the synthesis of proteins in the cell. The male germ cell-specific ribosome displays a ribosomal polypeptide exit tunnel of distinct size and charge states compared with the classical ribosome. It is responsible for regulating the biosynthesis and folding of a subset of male germ-cell-specific proteins that are essential for the formation of sperm. This is Ribosomal protein eL39-like 2 from Homo sapiens (Human).